The sequence spans 102 residues: Small ribosomal subunit protein uS10 (102 aa).

Belongs to the universal ribosomal protein uS10 family. In terms of assembly, part of the 30S ribosomal subunit.

Involved in the binding of tRNA to the ribosomes. This Staphylococcus saprophyticus subsp. saprophyticus (strain ATCC 15305 / DSM 20229 / NCIMB 8711 / NCTC 7292 / S-41) protein is Small ribosomal subunit protein uS10.